We begin with the raw amino-acid sequence, 191 residues long: Protein YceI (191 aa).

The first 22 residues, 1-22, serve as a signal peptide directing secretion; sequence MKKNLLGFTLASLLFTTGSAVA.

The protein belongs to the UPF0312 family. Type 1 subfamily.

The protein resides in the periplasm. This Salmonella dublin (strain CT_02021853) protein is Protein YceI.